The following is an 81-amino-acid chain: Protein L83L (81 aa).

Residues 1–28 (MDTSLKNNDGALDADNKNYQDYKDEPDK) form a disordered region. The span at 14–28 (ADNKNYQDYKDEPDK) shows a compositional bias: basic and acidic residues.

It belongs to the asfivirus L83L family. As to quaternary structure, interacts with host IL1B.

Its subcellular location is the host cytoplasm. Functionally, may subvert the host innate immune response by interacting with host IL1B and interfering with its function. This chain is Protein L83L, found in African swine fever virus (isolate Tick/South Africa/Pretoriuskop Pr4/1996) (ASFV).